A 574-amino-acid polypeptide reads, in one-letter code: Potassium-transporting ATPase potassium-binding subunit (574 aa).

10 consecutive transmembrane segments (helical) span residues 7 to 27, 65 to 85, 136 to 156, 175 to 195, 264 to 284, 292 to 312, 390 to 410, 427 to 447, 494 to 514, and 534 to 554; these read IELG…GTHL, IEYA…SYLI, FGLA…AAAL, LIRI…IILL, FVEM…FGLS, WSIW…CFIF, GLYG…LMIG, MAVL…ALAL, LLLG…ILAI, and GWLF…LNFF.

It belongs to the KdpA family. In terms of assembly, the system is composed of three essential subunits: KdpA, KdpB and KdpC.

It is found in the cell inner membrane. Functionally, part of the high-affinity ATP-driven potassium transport (or Kdp) system, which catalyzes the hydrolysis of ATP coupled with the electrogenic transport of potassium into the cytoplasm. This subunit binds the periplasmic potassium ions and delivers the ions to the membrane domain of KdpB through an intramembrane tunnel. This chain is Potassium-transporting ATPase potassium-binding subunit, found in Methylacidiphilum infernorum (isolate V4) (Methylokorus infernorum (strain V4)).